Reading from the N-terminus, the 452-residue chain is Ribosomal L1 domain-containing protein 1 (452 aa).

Met-1 carries the N-acetylmethionine modification. Residues Lys-119 and Lys-253 each participate in a glycyl lysine isopeptide (Lys-Gly) (interchain with G-Cter in SUMO2) cross-link. Positions 277-350 form a coiled coil; sequence LRSLRKQELK…QKVTEECEEA (74 aa). The disordered stretch occupies residues 283-452; that stretch reads QELKKRKREN…DKKTKAAHSN (170 aa). The span at 292-301 shows a compositional bias: basic and acidic residues; sequence NAKLKKESKM. Polar residues predominate over residues 309–319; sequence ATSLLTQSGLA. The segment covering 330–341 has biased composition (basic residues); that stretch reads QKKKTNKAHKKQ. Thr-334, Thr-344, Thr-360, Thr-399, and Thr-407 each carry phosphothreonine. Residues 414–423 are compositionally biased toward basic and acidic residues; the sequence is KDVQEFRKPE. Residues 425–440 show a composition bias toward polar residues; that stretch reads SSFSTPRKSGKKASNT. Thr-429 carries the post-translational modification Phosphothreonine. Position 432 is an N6-acetyllysine (Lys-432). Residue Ser-433 is modified to Phosphoserine.

The protein belongs to the universal ribosomal protein uL1 family. Highly divergent. As to quaternary structure, interacts with ING1. Interacts with KPNA7 and KPNA2.

The protein localises to the nucleus. The protein resides in the nucleolus. Functionally, regulates cellular senescence through inhibition of PTEN translation. Acts as a pro-apoptotic regulator in response to DNA damage. The sequence is that of Ribosomal L1 domain-containing protein 1 from Mus musculus (Mouse).